The following is a 723-amino-acid chain: uncharacterized protein (723 aa).

Residues 1–12 (MTGKKKNRHQKK) show a composition bias toward basic residues. Disordered regions lie at residues 1 to 166 (MTGK…EKEI), 181 to 212 (IKRKKEKKVKPQPVQPTPPVPAPAPQQSSGWG), 268 to 289 (LPLSDTEDSDNDNDNGGDDNDN), and 391 to 455 (KNKS…NTST). A compositionally biased stretch (low complexity) spans 30-42 (DETTTTTTTTTTT). Basic and acidic residues-rich tracts occupy residues 45–129 (EETK…KTDD) and 149–166 (TDIKDEKKEEKKKVEKEI). The stretch at 53–173 (IVENKDEDKK…KEIEDPNKKY (121 aa)) forms a coiled coil. Residues 181–190 (IKRKKEKKVK) show a composition bias toward basic residues. A compositionally biased stretch (pro residues) spans 193 to 204 (PVQPTPPVPAPA). The segment covering 272–288 (DTEDSDNDNDNGGDDND) has biased composition (acidic residues). Over residues 397-455 (DENNNNNNNNNQQQPQQQQTTSPTLSTSPTSPKSPTTTTTNTTTTTTTNTNNNNNNTST) the composition is skewed to low complexity.

This is an uncharacterized protein from Dictyostelium discoideum (Social amoeba).